The primary structure comprises 475 residues: UDP-glycosyltransferase 708A6 (475 aa).

Residues S286, 348–349 (WV), 366–374 (HCGWNSLTE), and 388–391 (FGDQ) contribute to the UDP-alpha-D-glucose site.

It belongs to the UDP-glycosyltransferase family. In terms of tissue distribution, expressed in radicles, hypocotyls and juvenile leaves. Expressed at low levels in roots.

In terms of biological role, bifunctional glycosyltransferase that can produce both C- and O-glycosidated flavonoids. Converts 2-hydroxynaringenin to isovitexin. Converts eriodictyol to orientin and isoorientin. Converts naringenin and eriodictyol to naringenin 7-O-glucoside and eriodictyol 7-O-glucoside, respectively. The protein is UDP-glycosyltransferase 708A6 of Zea mays (Maize).